The chain runs to 348 residues: Uroporphyrinogen decarboxylase (348 aa).

Substrate contacts are provided by residues 27–31, F46, D76, Y152, S207, and H320; that span reads RQAGR.

This sequence belongs to the uroporphyrinogen decarboxylase family. Homodimer.

The protein resides in the cytoplasm. It carries out the reaction uroporphyrinogen III + 4 H(+) = coproporphyrinogen III + 4 CO2. It functions in the pathway porphyrin-containing compound metabolism; protoporphyrin-IX biosynthesis; coproporphyrinogen-III from 5-aminolevulinate: step 4/4. In terms of biological role, catalyzes the decarboxylation of four acetate groups of uroporphyrinogen-III to yield coproporphyrinogen-III. The sequence is that of Uroporphyrinogen decarboxylase from Bacillus cereus (strain B4264).